The primary structure comprises 81 residues: Small ribosomal subunit protein bS16c (81 aa).

The protein belongs to the bacterial ribosomal protein bS16 family.

Its subcellular location is the plastid. It is found in the chloroplast. This is Small ribosomal subunit protein bS16c from Emiliania huxleyi (Coccolithophore).